Consider the following 210-residue polypeptide: Somatotropin (210 aa).

Residues 1-22 form the signal peptide; the sequence is MGQVFLLMPVLLVSCFLSQGAA. H38 lines the Zn(2+) pocket. Cysteines 71 and 183 form a disulfide. Position 192 (E192) interacts with Zn(2+). A disulfide bond links C200 and C208.

Belongs to the somatotropin/prolactin family.

The protein localises to the secreted. Functionally, growth hormone plays an important role in growth control and is involved in the regulation of several anabolic processes. Implicated as an osmoregulatory substance important for seawater adaptation. This is Somatotropin (gh) from Oncorhynchus keta (Chum salmon).